We begin with the raw amino-acid sequence, 144 residues long: Small ribosomal subunit protein uS19 (144 aa).

It belongs to the universal ribosomal protein uS19 family.

Protein S19 forms a complex with S13 that binds strongly to the 16S ribosomal RNA. This chain is Small ribosomal subunit protein uS19, found in Hyperthermus butylicus (strain DSM 5456 / JCM 9403 / PLM1-5).